The primary structure comprises 118 residues: Small ribosomal subunit protein uS13 (118 aa).

A disordered region spans residues 94–118 (SLPLRGQRTKTNARTRKGPRKPIKK).

The protein belongs to the universal ribosomal protein uS13 family. As to quaternary structure, part of the 30S ribosomal subunit. Forms a loose heterodimer with protein S19. Forms two bridges to the 50S subunit in the 70S ribosome.

Functionally, located at the top of the head of the 30S subunit, it contacts several helices of the 16S rRNA. In the 70S ribosome it contacts the 23S rRNA (bridge B1a) and protein L5 of the 50S subunit (bridge B1b), connecting the 2 subunits; these bridges are implicated in subunit movement. Contacts the tRNAs in the A and P-sites. The polypeptide is Small ribosomal subunit protein uS13 (Idiomarina loihiensis (strain ATCC BAA-735 / DSM 15497 / L2-TR)).